The chain runs to 404 residues: Cysteine desulfurase IscS (404 aa).

Residues 75 to 76 (AT), N155, Q183, and 203 to 205 (SGH) contribute to the pyridoxal 5'-phosphate site. K206 bears the N6-(pyridoxal phosphate)lysine mark. T243 lines the pyridoxal 5'-phosphate pocket. Catalysis depends on C328, which acts as the Cysteine persulfide intermediate. C328 is a binding site for [2Fe-2S] cluster.

Belongs to the class-V pyridoxal-phosphate-dependent aminotransferase family. NifS/IscS subfamily. In terms of assembly, homodimer. Forms a heterotetramer with IscU, interacts with other sulfur acceptors. Pyridoxal 5'-phosphate is required as a cofactor.

It is found in the cytoplasm. It carries out the reaction (sulfur carrier)-H + L-cysteine = (sulfur carrier)-SH + L-alanine. Its pathway is cofactor biosynthesis; iron-sulfur cluster biosynthesis. Master enzyme that delivers sulfur to a number of partners involved in Fe-S cluster assembly, tRNA modification or cofactor biosynthesis. Catalyzes the removal of elemental sulfur atoms from cysteine to produce alanine. Functions as a sulfur delivery protein for Fe-S cluster synthesis onto IscU, an Fe-S scaffold assembly protein, as well as other S acceptor proteins. This chain is Cysteine desulfurase IscS, found in Shewanella baltica (strain OS223).